Reading from the N-terminus, the 92-residue chain is Progonadoliberin-1 (92 aa).

A signal peptide spans 1-23 (MGLIPKLLAGLVLLTLCVENGSG). The residue at position 24 (Gln24) is a Pyrrolidone carboxylic acid. Gly33 is modified (glycine amide).

The protein belongs to the GnRH family. Post-translationally, the precursor is cleaved by ACE, which removes the Gly-Lys-Arg peptide at the C-terminus, leading to mature hormone. The mature form of Gonadoliberin-1 is also cleaved and degraded by ACE.

It localises to the secreted. Functionally, stimulates the secretion of gonadotropins; it stimulates the secretion of both luteinizing and follicle-stimulating hormones. This chain is Progonadoliberin-1 (GNRH1), found in Cavia porcellus (Guinea pig).